We begin with the raw amino-acid sequence, 772 residues long: Protocadherin beta-6 (772 aa).

The first 28 residues, 1-28 (METTLAKTPEKRQVVFLAILLLLWEAGS), serve as a signal peptide directing secretion. Cadherin domains lie at 31–133 (IRYS…SPEF), 134–242 (PDTE…APEF), 243–346 (VQSL…APKL), 347–450 (TISS…APAF), and 451–560 (TQTS…APFI). The Extracellular portion of the chain corresponds to 31–690 (IRYSIPEETE…QDEDMLTLYL (660 aa)). An intrachain disulfide couples cysteine 96 to cysteine 102. Asparagine 169 carries an N-linked (GlcNAc...) asparagine glycan. Serine 223 carries an O-linked (Man) serine glycan. Residue threonine 225 is glycosylated (O-linked (Man) threonine). The N-linked (GlcNAc...) asparagine glycan is linked to asparagine 417. N-linked (GlcNAc...) asparagine glycosylation occurs at asparagine 566. The region spanning 575 to 675 (LPRAAEPGYL…SQPYLPLPEV (101 aa)) is the Cadherin 6 domain. A helical membrane pass occupies residues 691 to 711 (VIALASVSSLFLLSVLLFVGV). At 712-772 (RLCRRVREAS…DFKFLNHYSQ (61 aa)) the chain is on the cytoplasmic side.

In terms of assembly, forms homodimers in trans (molecules expressed by two different cells). Forms promiscuous heterodimers in cis (at the plasma membrane of the same cell) with other protocadherins.

The protein localises to the cell membrane. In terms of biological role, calcium-dependent cell-adhesion protein involved in cells self-recognition and non-self discrimination. Thereby, it is involved in the establishment and maintenance of specific neuronal connections in the brain. The sequence is that of Protocadherin beta-6 from Mus musculus (Mouse).